The following is a 292-amino-acid chain: MGSSLWTCLILLSLASASFAANPRTPIDVPFGRNYVPTWAFDHIKYLNGGSEIQLHLDKYTGTGFQSKGSYLFGHFSMYIKLVPGDSAGTVTAFYLSSTNAEHDEIDFEFLGNRTGQPYILQTNVFTGGKGDREQRIYLWFDPTTQYHRYSVLWNMYQIVFYVDDYPIRVFKNSNDLGVKFPFNQPMKIYNSLWNADDWATRGGLEKTDWSKAPFIASYKGFHIDGCEASVNAKFCDTQGKRWWDQPEFRDLDAAQWQKLAWVRNKYTIYNYCTDRKRYSQVPPECTRDRDI.

The signal sequence occupies residues 1–20 (MGSSLWTCLILLSLASASFA). Positions 21–219 (ANPRTPIDVP…WSKAPFIASY (199 aa)) constitute a GH16 domain. E105 serves as the catalytic Nucleophile. E109 serves as the catalytic Proton donor. E109 lines the xyloglucan pocket. A glycan (N-linked (GlcNAc...) asparagine) is linked at N113. Residues 122 to 124 (QTN), 132 to 134 (DRE), 198 to 199 (DW), and G203 contribute to the xyloglucan site. 2 disulfide bridges follow: C227-C236 and C273-C286. Residue R278 coordinates xyloglucan.

It belongs to the glycosyl hydrolase 16 family. XTH group 1 subfamily. Contains at least one intrachain disulfide bond essential for its enzymatic activity. In terms of tissue distribution, predominantly expressed in the phloem fibers of growing internodes. Expressed in xylem cells in the basal part of the internode. In the internode, it is expressed closer to the top of the internode compared to XTHB.

It is found in the secreted. The protein localises to the cell wall. Its subcellular location is the extracellular space. It localises to the apoplast. The catalysed reaction is breaks a beta-(1-&gt;4) bond in the backbone of a xyloglucan and transfers the xyloglucanyl segment on to O-4 of the non-reducing terminal glucose residue of an acceptor, which can be a xyloglucan or an oligosaccharide of xyloglucan.. Functionally, catalyzes xyloglucan endohydrolysis (XEH) and/or endotransglycosylation (XET). Cleaves and religates xyloglucan polymers, an essential constituent of the primary cell wall, and thereby participates in cell wall construction of growing tissues. The protein is Xyloglucan endotransglucosylase/hydrolase protein A (XTHA) of Phaseolus angularis (Azuki bean).